The following is a 154-amino-acid chain: Endoribonuclease YbeY (154 aa).

Zn(2+) contacts are provided by His-115, His-119, and His-125.

This sequence belongs to the endoribonuclease YbeY family. It depends on Zn(2+) as a cofactor.

It is found in the cytoplasm. In terms of biological role, single strand-specific metallo-endoribonuclease involved in late-stage 70S ribosome quality control and in maturation of the 3' terminus of the 16S rRNA. This Halorhodospira halophila (strain DSM 244 / SL1) (Ectothiorhodospira halophila (strain DSM 244 / SL1)) protein is Endoribonuclease YbeY.